A 445-amino-acid chain; its full sequence is Transmembrane protein 184C (445 aa).

The next 7 membrane-spanning stretches (helical) occupy residues 15–35, 46–66, 84–104, 177–197, 210–230, 252–272, and 285–305; these read LVVL…VWEL, AWFI…WGIL, ILWM…YPNI, YTVV…VGVY, YLVI…VLFY, VVFV…VGVI, and AVAT…AAIA. Disordered stretches follow at residues 369–393 and 421–445; these read EHTS…SSPM and TSAT…LDRS. The segment covering 370–390 has biased composition (polar residues); it reads HTSLLSSSTQDPISDASSMPS.

This sequence belongs to the TMEM184 family.

It localises to the membrane. In terms of biological role, may play a role in cell growth. This Gallus gallus (Chicken) protein is Transmembrane protein 184C (TMEM184C).